The chain runs to 218 residues: Oxygen regulatory protein NreC (218 aa).

One can recognise a Response regulatory domain in the interval Lys2–Tyr119. 4-aspartylphosphate is present on Asp53. Residues Ser149 to Lys214 enclose the HTH luxR-type domain. The H-T-H motif DNA-binding region spans Asn173–Thr192.

Phosphorylated by NreB.

Its subcellular location is the cytoplasm. Functionally, member of the two-component regulatory system NreB/NreC involved in the control of dissimilatory nitrate/nitrite reduction in response to oxygen. Phosphorylated NreC binds to a GC-rich palindromic sequence at the promoters of the nitrate (narGHJI) and nitrite (nir) reductase operons, as well as the putative nitrate transporter gene narT, and activates their expression. The protein is Oxygen regulatory protein NreC (nreC) of Staphylococcus epidermidis (strain ATCC 35984 / DSM 28319 / BCRC 17069 / CCUG 31568 / BM 3577 / RP62A).